Here is a 352-residue protein sequence, read N- to C-terminus: Protein Wnt-3a (352 aa).

A signal peptide spans 1–18; that stretch reads MASFGYFLFLCGLSQALS. An intrachain disulfide couples Cys77 to Cys88. Residues Asn87 and Asn92 are each glycosylated (N-linked (GlcNAc...) asparagine). Intrachain disulfides connect Cys128/Cys136, Cys138/Cys155, Cys203/Cys217, Cys205/Cys212, Cys281/Cys312, Cys297/Cys307, Cys311/Cys351, Cys327/Cys342, Cys329/Cys339, and Cys334/Cys335. Residue Ser209 is the site of O-palmitoleoyl serine; by PORCN attachment. Asn298 is a glycosylation site (N-linked (GlcNAc...) asparagine).

It belongs to the Wnt family. In terms of processing, palmitoleoylation is required for efficient binding to frizzled receptors. Depalmitoleoylation leads to inhibit the Wnt signaling pathway. Post-translationally, disulfide bonds have critical and distinct roles in secretion and activity. Loss of each conserved cysteine in WNT3A results in high molecular weight oxidized Wnt oligomers, which are formed through inter-Wnt disulfide bonding. Expressed in cornea. Isoform 1 is expressed in the primitive streak, dorsal neural tube, proximal otic vesicle, the apical ectodermal ridge and the epithelium of feather buds.

The protein resides in the secreted. It localises to the extracellular space. The protein localises to the extracellular matrix. It is found in the cytoplasm. Ligand for members of the frizzled family of seven transmembrane receptors. Functions in the canonical Wnt signaling pathway that results in activation of transcription factors of the TCF/LEF family. Regulates chick apical ectodermal ridge formation. Required for normal embryonic mesoderm development and formation of caudal somites. Required for normal morphogenesis of the developing neural tube. The polypeptide is Protein Wnt-3a (WNT3A) (Gallus gallus (Chicken)).